The following is a 379-amino-acid chain: Sporozoite surface protein P36 (379 aa).

The signal sequence occupies residues 1 to 33; it reads MAYNIWEEYIMANFHNVYPVVTNLFLFIALSYS. 6-Cys domains follow at residues 69–206 and 215–379; these read FVFF…VKAN and FIKG…TVES. 3 cysteine pairs are disulfide-bonded: Cys91–Cys101, Cys115–Cys186, and Cys129–Cys184. 2 N-linked (GlcNAc...) asparagine glycosylation sites follow: Asn98 and Asn118. N-linked (GlcNAc...) asparagine glycosylation occurs at Asn206. 3 cysteine pairs are disulfide-bonded: Cys219-Cys243, Cys257-Cys360, and Cys295-Cys358. Asn298 and Asn374 each carry an N-linked (GlcNAc...) asparagine glycan.

The protein localises to the cell surface. It is found in the cell membrane. Functionally, involved in sporozoite infection of hepatocytes and replication therein. The sequence is that of Sporozoite surface protein P36 (PF36) from Plasmodium falciparum (isolate 3D7).